Reading from the N-terminus, the 833-residue chain is DNA ligase (833 aa).

Residues 35–39 (DVEYD), 84–85 (SL), and Glu-115 contribute to the NAD(+) site. Lys-117 serves as the catalytic N6-AMP-lysine intermediate. NAD(+) is bound by residues Arg-138, Glu-175, Lys-292, and Lys-316. The Zn(2+) site is built by Cys-410, Cys-413, Cys-428, and Cys-434. Positions 750–833 (VQAGPLDGQT…AFLSEHGQAV (84 aa)) constitute a BRCT domain.

The protein belongs to the NAD-dependent DNA ligase family. LigA subfamily. Requires Mg(2+) as cofactor. Mn(2+) serves as cofactor.

The enzyme catalyses NAD(+) + (deoxyribonucleotide)n-3'-hydroxyl + 5'-phospho-(deoxyribonucleotide)m = (deoxyribonucleotide)n+m + AMP + beta-nicotinamide D-nucleotide.. Its function is as follows. DNA ligase that catalyzes the formation of phosphodiester linkages between 5'-phosphoryl and 3'-hydroxyl groups in double-stranded DNA using NAD as a coenzyme and as the energy source for the reaction. It is essential for DNA replication and repair of damaged DNA. The chain is DNA ligase from Xanthomonas campestris pv. campestris (strain 8004).